We begin with the raw amino-acid sequence, 509 residues long: ATP synthase subunit alpha (509 aa).

169 to 176 (GDRQTGKT) contacts ATP.

Belongs to the ATPase alpha/beta chains family. In terms of assembly, F-type ATPases have 2 components, CF(1) - the catalytic core - and CF(0) - the membrane proton channel. CF(1) has five subunits: alpha(3), beta(3), gamma(1), delta(1), epsilon(1). CF(0) has three main subunits: a(1), b(2) and c(9-12). The alpha and beta chains form an alternating ring which encloses part of the gamma chain. CF(1) is attached to CF(0) by a central stalk formed by the gamma and epsilon chains, while a peripheral stalk is formed by the delta and b chains.

The protein resides in the cell inner membrane. It carries out the reaction ATP + H2O + 4 H(+)(in) = ADP + phosphate + 5 H(+)(out). Functionally, produces ATP from ADP in the presence of a proton gradient across the membrane. The alpha chain is a regulatory subunit. This Chelativorans sp. (strain BNC1) protein is ATP synthase subunit alpha.